Consider the following 523-residue polypeptide: REST corepressor 2 (523 aa).

Positions 1–43 (MPSVMEKPSAGSGILSRSRAKTAPNGGQPHSEDDSSEEEHSHD) are disordered. Residues 30–43 (HSEDDSSEEEHSHD) show a composition bias toward basic and acidic residues. Residues serine 31, serine 35, serine 36, and serine 63 each carry the phosphoserine modification. An ELM2 domain is found at 44-129 (SMIRVGTNYQ…KSLADLANFT (86 aa)). Residue lysine 88 forms a Glycyl lysine isopeptide (Lys-Gly) (interchain with G-Cter in SUMO2) linkage. An SANT 1 domain is found at 130 to 181 (PFPDEWTVEDKVLFEQAFGFHGKCFQRIQQMLPDKVIPSLVKYYYSWKKTRS). Positions 185–244 (VMDRQARRLGGRKDKEDSDELEEGRGAVSEGEPDTGDPKREPLPSRPLNARPGPGKKEVQ) are disordered. Serine 202 is subject to Phosphoserine. A coiled-coil region spans residues 283–314 (TLRGLDSQLISLKRQVQSMKQTNSSLRQALEG). One can recognise an SANT 2 domain in the interval 327-378 (KFNSRWTTDEQLLAVQAIRRYGKDFGAIAEVIGNKTLTQVKTFFVSYRRRFN). Residues 387 to 523 (EAEQDGAPAA…APLEPPAPSL (137 aa)) are disordered. A compositionally biased stretch (pro residues) spans 432-459 (SVPPAPPPPPPPTSLSQPPPLLRPPLPT). Positions 460-482 (APTLLRQPPPLQQGRFLQPRLAP) are enriched in low complexity. Residue arginine 479 is modified to Asymmetric dimethylarginine. Positions 504–523 (GPQPPPTLVGAPLEPPAPSL) are enriched in pro residues.

The protein belongs to the CoREST family. In terms of tissue distribution, predominantly, but not exclusively, expressed in neural tissue. Strongly expressed in neural domains of the developing brain of the developing mouse CNS.

It localises to the nucleus. May act as a component of a corepressor complex that represses transcription. The chain is REST corepressor 2 (Rcor2) from Mus musculus (Mouse).